The following is a 385-amino-acid chain: MKMLPGVGVFGTGSSARVLVPLLRAEGFTVEALWGKTEEEAKQLAEEMNIAFYTSRTDDILLHQDVDLVCISIPPPLTRQISVKALGIGKNVVCEKAATSVDAFRMVTASRYYPQLMSLVGNVLRFLPAFVRMKQLISEHYVGAVMICDARIYSGSLLSPSYGWICDELMGGGGLHTMGTYIVDLLTHLTGRRAEKVHGLLKTFVRQNAAIRGIRHVTSDDFCFFQMLMGGGVCSTVTLNFNMPGAFVHEVMVVGSAGRLVARGADLYGQKNSATQEELLLRDSLAVGAGLPEQGPQDVPLLYLKGMVYMVQALRQSFQGQGDRRTWDRTPVSMAASFEDGLYMQSVVDAIKRSSRSGEWEAVEVLTEEPDTNQNLCEALQRNNL.

An N-terminal signal peptide occupies residues 1 to 25 (MKMLPGVGVFGTGSSARVLVPLLRA).

Belongs to the Gfo/Idh/MocA family.

Its subcellular location is the secreted. It localises to the extracellular space. It is found in the extracellular matrix. Its function is as follows. Promotes matrix assembly. This Homo sapiens (Human) protein is Glucose-fructose oxidoreductase domain-containing protein 2 (GFOD2).